Here is a 311-residue protein sequence, read N- to C-terminus: Pyrimidine-specific ribonucleoside hydrolase RihA (311 aa).

Residue His240 is part of the active site.

The protein belongs to the IUNH family. RihA subfamily.

In terms of biological role, hydrolyzes with equal efficiency cytidine or uridine to ribose and cytosine or uracil, respectively. The protein is Pyrimidine-specific ribonucleoside hydrolase RihA of Escherichia coli O127:H6 (strain E2348/69 / EPEC).